Here is a 499-residue protein sequence, read N- to C-terminus: Terpentedienyl-diphosphate synthase (499 aa).

Mg(2+)-binding residues include D284 and D286. Positions D284–D287 match the DXDD motif motif.

It belongs to the terpene synthase family. As to quaternary structure, monomer. Requires Mg(2+) as cofactor.

It catalyses the reaction (2E,6E,10E)-geranylgeranyl diphosphate = terpentedienyl diphosphate. It participates in antibiotic biosynthesis. Its function is as follows. Involved in the production of the isoprenoid antibiotic terpentecin. Converts geranylgeranyl diphosphate (GGDP) into terpentedienol diphosphate (TDP) by a protonation-initiated cyclization. This Kitasatospora griseola (Streptomyces griseolosporeus) protein is Terpentedienyl-diphosphate synthase (cyc1).